The following is a 303-amino-acid chain: Mycothiol acetyltransferase (303 aa).

N-acetyltransferase domains follow at residues 10-156 and 162-303; these read ALPG…LAVP and LAVR…SGPR. Glu41 contacts 1D-myo-inositol 2-(L-cysteinylamino)-2-deoxy-alpha-D-glucopyranoside. 86–88 is an acetyl-CoA binding site; that stretch reads LLV. The 1D-myo-inositol 2-(L-cysteinylamino)-2-deoxy-alpha-D-glucopyranoside site is built by Glu189, Lys228, and Glu235. Residues 239–241 and 246–252 each bind acetyl-CoA; these read LGV and SGAGLGR. Tyr272 is a 1D-myo-inositol 2-(L-cysteinylamino)-2-deoxy-alpha-D-glucopyranoside binding site. 277–282 contributes to the acetyl-CoA binding site; it reads NLRAVR.

It belongs to the acetyltransferase family. MshD subfamily. In terms of assembly, monomer.

It catalyses the reaction 1D-myo-inositol 2-(L-cysteinylamino)-2-deoxy-alpha-D-glucopyranoside + acetyl-CoA = mycothiol + CoA + H(+). Functionally, catalyzes the transfer of acetyl from acetyl-CoA to desacetylmycothiol (Cys-GlcN-Ins) to form mycothiol. The sequence is that of Mycothiol acetyltransferase from Kineococcus radiotolerans (strain ATCC BAA-149 / DSM 14245 / SRS30216).